A 176-amino-acid chain; its full sequence is MRHRRALLFLTGAAVFVSALTAAAITGGYRLNLTPSEPLGLWRIEQLQRPVAIGDLVFLCPPSTAVFAEARVRGYLRRGLCAGGVAPLIKTVAALPGQRVEITDHVHIDGRSVPASSVSGTDGDGKVLLPDSGGVVPPHHLFLHSSFASSYDSRYFGPVPDSGLLSLARPVFTFHP.

The first 23 residues, 1-23 (MRHRRALLFLTGAAVFVSALTAA), serve as a signal peptide directing secretion.

Belongs to the peptidase S26C family.

It is found in the periplasm. In terms of biological role, involved in conjugal transfer of the plasmid. The polypeptide is Conjugal transfer protein TraF (traF) (Agrobacterium tumefaciens (strain 15955)).